The primary structure comprises 440 residues: Xaa-Pro dipeptidase (440 aa).

5 residues coordinate Mn(2+): D244, D255, H335, E380, and E419.

The protein belongs to the peptidase M24B family. Bacterial-type prolidase subfamily. The cofactor is Mn(2+).

It catalyses the reaction Xaa-L-Pro dipeptide + H2O = an L-alpha-amino acid + L-proline. Its function is as follows. Splits dipeptides with a prolyl residue in the C-terminal position. This is Xaa-Pro dipeptidase from Shewanella halifaxensis (strain HAW-EB4).